The primary structure comprises 381 residues: Homoserine O-succinyltransferase (381 aa).

Residues 45–360 (NAVLVCHALN…PHGHDAFLLD (316 aa)) form the AB hydrolase-1 domain. Serine 151 serves as the catalytic Nucleophile. Substrate is bound at residue arginine 221. Residues aspartate 321 and histidine 354 contribute to the active site. Aspartate 355 contributes to the substrate binding site.

Belongs to the AB hydrolase superfamily. MetX family. In terms of assembly, homodimer.

The protein resides in the cytoplasm. The enzyme catalyses L-homoserine + succinyl-CoA = O-succinyl-L-homoserine + CoA. Its pathway is amino-acid biosynthesis; L-methionine biosynthesis via de novo pathway; O-succinyl-L-homoserine from L-homoserine: step 1/1. Its function is as follows. Transfers a succinyl group from succinyl-CoA to L-homoserine, forming succinyl-L-homoserine. This is Homoserine O-succinyltransferase from Burkholderia ambifaria (strain MC40-6).